The primary structure comprises 94 residues: Protein LURE 1.1 (94 aa).

The N-terminal stretch at methionine 1–serine 19 is a signal peptide. 3 cysteine pairs are disulfide-bonded: cysteine 58–cysteine 75, cysteine 61–cysteine 82, and cysteine 65–cysteine 84. The segment at arginine 67–serine 87 is PRK6 binding.

The protein belongs to the DEFL family. As to quaternary structure, binds to PRK6 LRRs. In terms of tissue distribution, expressed in the pistil. Detected exclusively in the synergid cells.

It localises to the secreted. Functionally, pollen tube attractants guiding pollen tubes to the ovular micropyle. The sequence is that of Protein LURE 1.1 from Arabidopsis thaliana (Mouse-ear cress).